The chain runs to 315 residues: 7,8-didemethyl-8-hydroxy-5-deazariboflavin synthase (315 aa).

The Radical SAM core domain maps to 6–237; sequence ITYSPAFTLV…EDITIQIPAN (232 aa). Cys-20, Cys-24, and Cys-27 together coordinate [4Fe-4S] cluster.

The protein belongs to the radical SAM superfamily. CofG family. Consists of two subunits, CofG and CofH. The cofactor is [4Fe-4S] cluster.

It carries out the reaction 5-amino-5-(4-hydroxybenzyl)-6-(D-ribitylimino)-5,6-dihydrouracil + S-adenosyl-L-methionine = 7,8-didemethyl-8-hydroxy-5-deazariboflavin + 5'-deoxyadenosine + L-methionine + NH4(+) + H(+). Its pathway is cofactor biosynthesis; coenzyme F0 biosynthesis. Catalyzes the radical-mediated synthesis of 7,8-didemethyl-8-hydroxy-5-deazariboflavin from 5-amino-5-(4-hydroxybenzyl)-6-(D-ribitylimino)-5,6-dihydrouracil. The protein is 7,8-didemethyl-8-hydroxy-5-deazariboflavin synthase of Thermosynechococcus vestitus (strain NIES-2133 / IAM M-273 / BP-1).